The primary structure comprises 93 residues: MIKINLQLFAHKKGVGSSRNGRDSAAKRLGVKRADGQFVLAGNILVRQRGTKIHPGVNVGIGKDDTLFALKDGKVKFARLGRDKKQVMIVTAE.

A propeptide spanning residues 1–9 (MIKINLQLF) is cleaved from the precursor.

Belongs to the bacterial ribosomal protein bL27 family. Post-translationally, the N-terminus is cleaved by ribosomal processing cysteine protease Prp.

The protein is Large ribosomal subunit protein bL27 of Ruminiclostridium cellulolyticum (strain ATCC 35319 / DSM 5812 / JCM 6584 / H10) (Clostridium cellulolyticum).